A 193-amino-acid chain; its full sequence is dTTP/UTP pyrophosphatase (193 aa).

D70 functions as the Proton acceptor in the catalytic mechanism.

This sequence belongs to the Maf family. YhdE subfamily. A divalent metal cation serves as cofactor.

It localises to the cytoplasm. It carries out the reaction dTTP + H2O = dTMP + diphosphate + H(+). It catalyses the reaction UTP + H2O = UMP + diphosphate + H(+). Its function is as follows. Nucleoside triphosphate pyrophosphatase that hydrolyzes dTTP and UTP. May have a dual role in cell division arrest and in preventing the incorporation of modified nucleotides into cellular nucleic acids. In Ruminiclostridium cellulolyticum (strain ATCC 35319 / DSM 5812 / JCM 6584 / H10) (Clostridium cellulolyticum), this protein is dTTP/UTP pyrophosphatase.